The chain runs to 218 residues: Pyridoxine/pyridoxamine 5'-phosphate oxidase (218 aa).

Residues 14–17 (RREY) and Lys72 contribute to the substrate site. Residues 67–72 (RIVLLK), 82–83 (YT), Arg88, Lys89, and Gln111 each bind FMN. Substrate is bound by residues Tyr129, Arg133, and Ser137. FMN contacts are provided by residues 146–147 (QS) and Trp191. Position 197-199 (197-199 (RLH)) interacts with substrate. Arg201 is a binding site for FMN.

This sequence belongs to the pyridoxamine 5'-phosphate oxidase family. In terms of assembly, homodimer. FMN is required as a cofactor.

The catalysed reaction is pyridoxamine 5'-phosphate + O2 + H2O = pyridoxal 5'-phosphate + H2O2 + NH4(+). The enzyme catalyses pyridoxine 5'-phosphate + O2 = pyridoxal 5'-phosphate + H2O2. The protein operates within cofactor metabolism; pyridoxal 5'-phosphate salvage; pyridoxal 5'-phosphate from pyridoxamine 5'-phosphate: step 1/1. It functions in the pathway cofactor metabolism; pyridoxal 5'-phosphate salvage; pyridoxal 5'-phosphate from pyridoxine 5'-phosphate: step 1/1. Its function is as follows. Catalyzes the oxidation of either pyridoxine 5'-phosphate (PNP) or pyridoxamine 5'-phosphate (PMP) into pyridoxal 5'-phosphate (PLP). The protein is Pyridoxine/pyridoxamine 5'-phosphate oxidase of Escherichia coli O139:H28 (strain E24377A / ETEC).